A 549-amino-acid polypeptide reads, in one-letter code: MAAKDVKFGDSARKRMVAGVNTLADAVKVTLGPKGRNVVLDKSFGAPTVTKDGVSVAKEIELKDKFENMGAQMVKEVASKTNDEAGDGTTTATVLAQAILNEGLKSVAAGMNPMDLKRGIDKAVIAAVKEIKNISRPCEDSKSIAQVGTISANSDERIGNIIAEAMEKVGKEGVITVEEGSGLEDELDVVEGMQFDRGYLSAYFVNNQDSMSAELEDPFILLVDKKISNIREMLPVLEAVAKSSKPLLVISEDLEGEALATLVVNNMRGIVKVAAVKAPGFGDRRKEMLQDIAILTGGTVISEEVGLNLEGATLDDLGTAKRVVVTKENTTIIDGAGAKSDIEARVAQIRRQIEETSSDYDREKLQERVAKLAGGVAVIKVGAATEVEMKEKKARVEDALHSTRAAVEEGVVPGGGVALVRALQAVSDLAGDNADQDVGINLLRRAMEAPLRQIVANAGGEPSVVVDKVRQGEGAFGYNAGTEAYGDMLEMGILDPAKVTRTALQSAASIAGLMITTECMVSDLPEDDKKGGMPDMGGMGGMGGMGGMM.

Residues Thr30–Pro33, Lys51, Asp87–Thr91, Gly415, and Asp495 contribute to the ATP site.

The protein belongs to the chaperonin (HSP60) family. As to quaternary structure, forms a cylinder of 14 subunits composed of two heptameric rings stacked back-to-back. Interacts with the co-chaperonin GroES.

Its subcellular location is the cytoplasm. The enzyme catalyses ATP + H2O + a folded polypeptide = ADP + phosphate + an unfolded polypeptide.. Its function is as follows. Together with its co-chaperonin GroES, plays an essential role in assisting protein folding. The GroEL-GroES system forms a nano-cage that allows encapsulation of the non-native substrate proteins and provides a physical environment optimized to promote and accelerate protein folding. The protein is Chaperonin GroEL of Hahella chejuensis (strain KCTC 2396).